The sequence spans 100 residues: Osteocalcin (100 aa).

A signal peptide spans M1 to A23. Positions K24–R51 are excised as a propeptide. Residues Y52–G98 form the Gla domain. Positions 68, 72, 75, and 81 each coordinate Ca(2+). 4-carboxyglutamate occurs at positions 68, 72, and 75. Cysteines 74 and 80 form a disulfide.

The protein belongs to the osteocalcin/matrix Gla protein family. In terms of processing, gamma-carboxyglutamate residues are formed by vitamin K dependent carboxylation by GGCX. These residues are essential for the binding of calcium. Decarboxylation promotes the hormone activity.

It localises to the secreted. Its function is as follows. The carboxylated form is one of the main organic components of the bone matrix, which constitutes 1-2% of the total bone protein: it acts as a negative regulator of bone formation and is required to limit bone formation without impairing bone resorption or mineralization. The carboxylated form binds strongly to apatite and calcium. The uncarboxylated form acts as a hormone secreted by osteoblasts, which regulates different cellular processes, such as energy metabolism, male fertility and brain development. Regulates of energy metabolism by acting as a hormone favoring pancreatic beta-cell proliferation, insulin secretion and sensitivity and energy expenditure. Uncarboxylated osteocalcin hormone also promotes testosterone production in the testes: acts as a ligand for G protein-coupled receptor GPRC6A at the surface of Leydig cells, initiating a signaling response that promotes the expression of enzymes required for testosterone synthesis in a CREB-dependent manner. Also acts as a regulator of brain development: osteocalcin hormone crosses the blood-brain barrier and acts as a ligand for GPR158 on neurons, initiating a signaling response that prevents neuronal apoptosis in the hippocampus, favors the synthesis of all monoamine neurotransmitters and inhibits that of gamma-aminobutyric acid (GABA). Osteocalcin also crosses the placenta during pregnancy and maternal osteocalcin is required for fetal brain development. The sequence is that of Osteocalcin from Pan troglodytes (Chimpanzee).